The following is a 340-amino-acid chain: L-threonine 3-dehydrogenase (340 aa).

Cys38 lines the Zn(2+) pocket. Residues Thr40 and His43 each act as charge relay system in the active site. Zn(2+)-binding residues include His63, Glu64, Cys93, Cys96, Cys99, and Cys107. NAD(+) contacts are provided by residues Ile175, Asp195, Arg200, 262–264, and 286–287; these read LGI and IY.

The protein belongs to the zinc-containing alcohol dehydrogenase family. In terms of assembly, homotetramer. Zn(2+) serves as cofactor.

The protein resides in the cytoplasm. The enzyme catalyses L-threonine + NAD(+) = (2S)-2-amino-3-oxobutanoate + NADH + H(+). It functions in the pathway amino-acid degradation; L-threonine degradation via oxydo-reductase pathway; glycine from L-threonine: step 1/2. Functionally, catalyzes the NAD(+)-dependent oxidation of L-threonine to 2-amino-3-ketobutyrate. This Legionella pneumophila (strain Corby) protein is L-threonine 3-dehydrogenase.